The sequence spans 188 residues: MASYSTNDFKPGLKFIQDGEPCVIVENEFVKPGKGQAFTRTKIRKLISGKVLEINFKSGTSVEAADVVDYNYTYSYKDEDFWYFMHPETFEQISVDEKALGDNDKWLVDQAECIITLWNGSAISVTPPNFVELEVVETDPGLKGDTAGTGGKPATLSTGAVVRVPLFVQIGEVIRVDTRSGEYVSRVK.

N6-(3,6-diaminohexanoyl)-5-hydroxylysine is present on Lys34.

The protein belongs to the elongation factor P family. Post-translationally, may be beta-lysylated on the epsilon-amino group of Lys-34 by the combined action of EpmA and EpmB, and then hydroxylated on the C5 position of the same residue by EpmC (if this protein is present). Lysylation is critical for the stimulatory effect of EF-P on peptide-bond formation. The lysylation moiety may extend toward the peptidyltransferase center and stabilize the terminal 3-CCA end of the tRNA. Hydroxylation of the C5 position on Lys-34 may allow additional potential stabilizing hydrogen-bond interactions with the P-tRNA.

It is found in the cytoplasm. It participates in protein biosynthesis; polypeptide chain elongation. Functionally, involved in peptide bond synthesis. Alleviates ribosome stalling that occurs when 3 or more consecutive Pro residues or the sequence PPG is present in a protein, possibly by augmenting the peptidyl transferase activity of the ribosome. Modification of Lys-34 is required for alleviation. This Actinobacillus pleuropneumoniae serotype 5b (strain L20) protein is Elongation factor P.